Here is a 274-residue protein sequence, read N- to C-terminus: Undecaprenyl-diphosphatase 1 (274 aa).

Helical transmembrane passes span 4–24 (LLLL…FLPI), 45–65 (SAVF…YEYW), 84–104 (HLAI…LSFG), 111–131 (LFND…IMWI), 146–166 (IGLK…IPGT), 186–206 (ATEF…LLDL), 217–237 (FDWS…LLLI), and 249–269 (FMVF…FAYT).

The protein belongs to the UppP family.

It is found in the cell inner membrane. The catalysed reaction is di-trans,octa-cis-undecaprenyl diphosphate + H2O = di-trans,octa-cis-undecaprenyl phosphate + phosphate + H(+). Functionally, catalyzes the dephosphorylation of undecaprenyl diphosphate (UPP). Confers resistance to bacitracin. The protein is Undecaprenyl-diphosphatase 1 of Acinetobacter baylyi (strain ATCC 33305 / BD413 / ADP1).